A 189-amino-acid chain; its full sequence is Imidazoleglycerol-phosphate dehydratase (189 aa).

This sequence belongs to the imidazoleglycerol-phosphate dehydratase family.

The protein localises to the cytoplasm. It catalyses the reaction D-erythro-1-(imidazol-4-yl)glycerol 3-phosphate = 3-(imidazol-4-yl)-2-oxopropyl phosphate + H2O. The protein operates within amino-acid biosynthesis; L-histidine biosynthesis; L-histidine from 5-phospho-alpha-D-ribose 1-diphosphate: step 6/9. The protein is Imidazoleglycerol-phosphate dehydratase of Nautilia profundicola (strain ATCC BAA-1463 / DSM 18972 / AmH).